The primary structure comprises 146 residues: Peptide methionine sulfoxide reductase MsrB (146 aa).

The region spanning 6-129 (SAEAIAKLSA…NSASLRFVPK (124 aa)) is the MsrB domain. The Nucleophile role is filled by cysteine 118.

Belongs to the MsrB Met sulfoxide reductase family.

It carries out the reaction L-methionyl-[protein] + [thioredoxin]-disulfide + H2O = L-methionyl-(R)-S-oxide-[protein] + [thioredoxin]-dithiol. The protein is Peptide methionine sulfoxide reductase MsrB of Brucella melitensis biotype 1 (strain ATCC 23456 / CCUG 17765 / NCTC 10094 / 16M).